The following is a 241-amino-acid chain: 4-hydroxy-tetrahydrodipicolinate reductase (241 aa).

Residues 80–82 (ATT) and 104–107 (SANM) contribute to the NAD(+) site. Residue His-136 is the Proton donor/acceptor of the active site. His-137 is a (S)-2,3,4,5-tetrahydrodipicolinate binding site. The Proton donor role is filled by Lys-140. (S)-2,3,4,5-tetrahydrodipicolinate is bound at residue 146–147 (GT).

It belongs to the DapB family.

It localises to the cytoplasm. The catalysed reaction is (S)-2,3,4,5-tetrahydrodipicolinate + NAD(+) + H2O = (2S,4S)-4-hydroxy-2,3,4,5-tetrahydrodipicolinate + NADH + H(+). It carries out the reaction (S)-2,3,4,5-tetrahydrodipicolinate + NADP(+) + H2O = (2S,4S)-4-hydroxy-2,3,4,5-tetrahydrodipicolinate + NADPH + H(+). Its pathway is amino-acid biosynthesis; L-lysine biosynthesis via DAP pathway; (S)-tetrahydrodipicolinate from L-aspartate: step 4/4. Functionally, catalyzes the conversion of 4-hydroxy-tetrahydrodipicolinate (HTPA) to tetrahydrodipicolinate. In Staphylococcus haemolyticus (strain JCSC1435), this protein is 4-hydroxy-tetrahydrodipicolinate reductase.